The primary structure comprises 199 residues: Small ribosomal subunit protein uS4 (199 aa).

The region spanning 91–154 (SRLDNVVYRL…KDLIIVKEAL (64 aa)) is the S4 RNA-binding domain.

It belongs to the universal ribosomal protein uS4 family. As to quaternary structure, part of the 30S ribosomal subunit. Contacts protein S5. The interaction surface between S4 and S5 is involved in control of translational fidelity.

One of the primary rRNA binding proteins, it binds directly to 16S rRNA where it nucleates assembly of the body of the 30S subunit. In terms of biological role, with S5 and S12 plays an important role in translational accuracy. The sequence is that of Small ribosomal subunit protein uS4 from Phytoplasma mali (strain AT).